Consider the following 317-residue polypeptide: Universal stress protein MT2052 (317 aa).

ATP-binding positions include Gly-13, Gly-128–Ala-134, Ser-142–Val-143, Gly-175, Asp-208, Gly-277–Gly-283, and Ser-291–Ser-293.

This sequence belongs to the universal stress protein A family.

This Mycobacterium tuberculosis (strain CDC 1551 / Oshkosh) protein is Universal stress protein MT2052.